Consider the following 358-residue polypeptide: NADH-quinone oxidoreductase subunit H (358 aa).

Helical transmembrane passes span 20–40 (ITVG…IPLI), 95–115 (ALFY…WAVI), 128–148 (IGLL…IIAG), 168–188 (ISYE…SGSM), 206–226 (VFSW…ISAV), 253–273 (GFAF…IAAL), 295–315 (TPSA…YLWI), and 334–354 (VLIP…ISPL).

The protein belongs to the complex I subunit 1 family. As to quaternary structure, NDH-1 is composed of 14 different subunits. Subunits NuoA, H, J, K, L, M, N constitute the membrane sector of the complex.

The protein resides in the cell inner membrane. It carries out the reaction a quinone + NADH + 5 H(+)(in) = a quinol + NAD(+) + 4 H(+)(out). NDH-1 shuttles electrons from NADH, via FMN and iron-sulfur (Fe-S) centers, to quinones in the respiratory chain. The immediate electron acceptor for the enzyme in this species is believed to be ubiquinone. Couples the redox reaction to proton translocation (for every two electrons transferred, four hydrogen ions are translocated across the cytoplasmic membrane), and thus conserves the redox energy in a proton gradient. This subunit may bind ubiquinone. The chain is NADH-quinone oxidoreductase subunit H from Neisseria gonorrhoeae (strain ATCC 700825 / FA 1090).